We begin with the raw amino-acid sequence, 420 residues long: Gamma-glutamyl phosphate reductase (420 aa).

It belongs to the gamma-glutamyl phosphate reductase family.

Its subcellular location is the cytoplasm. The catalysed reaction is L-glutamate 5-semialdehyde + phosphate + NADP(+) = L-glutamyl 5-phosphate + NADPH + H(+). It functions in the pathway amino-acid biosynthesis; L-proline biosynthesis; L-glutamate 5-semialdehyde from L-glutamate: step 2/2. Catalyzes the NADPH-dependent reduction of L-glutamate 5-phosphate into L-glutamate 5-semialdehyde and phosphate. The product spontaneously undergoes cyclization to form 1-pyrroline-5-carboxylate. This Chlorobaculum parvum (strain DSM 263 / NCIMB 8327) (Chlorobium vibrioforme subsp. thiosulfatophilum) protein is Gamma-glutamyl phosphate reductase.